Here is a 311-residue protein sequence, read N- to C-terminus: Probable cell division protein WhiA (311 aa).

Positions 277-311 (TLKEVADQIPDGPISKSGVNHRFKKLHELAETLKE) form a DNA-binding region, H-T-H motif.

It belongs to the WhiA family.

In terms of biological role, involved in cell division and chromosome segregation. The protein is Probable cell division protein WhiA of Lactobacillus helveticus (strain DPC 4571).